A 426-amino-acid chain; its full sequence is Isovaleryl-CoA dehydrogenase, mitochondrial (426 aa).

A mitochondrion-targeting transit peptide spans 1 to 32; sequence MATAAWLLGRRVASWRMRPPLQSLAGLITQRT. An N6-acetyllysine; alternate mark is found at K58 and K78. An N6-succinyllysine; alternate mark is found at K58 and K78. FAD contacts are provided by residues 165-174 and 198-200; these read LAMSEPNAGS and WIT. S174 is a binding site for substrate. Residue 222-223 coordinates substrate; that stretch reads SR. The residue at position 241 (K241) is an N6-acetyllysine. Residues Y277 and 284–287 contribute to the substrate site; that span reads DLER. E286 serves as the catalytic Proton acceptor. Residue R312 coordinates FAD. K318 carries the post-translational modification N6-succinyllysine. FAD-binding positions include Q323 and 380 to 384; that span reads QCLGG. 407-408 serves as a coordination point for substrate; the sequence is AG. 409-411 serves as a coordination point for FAD; it reads TSE.

It belongs to the acyl-CoA dehydrogenase family. As to quaternary structure, homotetramer. The cofactor is FAD.

It is found in the mitochondrion matrix. It carries out the reaction 3-methylbutanoyl-CoA + oxidized [electron-transfer flavoprotein] + H(+) = 3-methylbut-2-enoyl-CoA + reduced [electron-transfer flavoprotein]. It catalyses the reaction pentanoyl-CoA + oxidized [electron-transfer flavoprotein] + H(+) = (2E)-pentenoyl-CoA + reduced [electron-transfer flavoprotein]. The enzyme catalyses hexanoyl-CoA + oxidized [electron-transfer flavoprotein] + H(+) = (2E)-hexenoyl-CoA + reduced [electron-transfer flavoprotein]. The catalysed reaction is butanoyl-CoA + oxidized [electron-transfer flavoprotein] + H(+) = (2E)-butenoyl-CoA + reduced [electron-transfer flavoprotein]. It participates in amino-acid degradation; L-leucine degradation; (S)-3-hydroxy-3-methylglutaryl-CoA from 3-isovaleryl-CoA: step 1/3. Functionally, catalyzes the conversion of isovaleryl-CoA/3-methylbutanoyl-CoA to 3-methylbut-2-enoyl-CoA as an intermediate step in the leucine (Leu) catabolic pathway. To a lesser extent, is also able to catalyze the oxidation of other saturated short-chain acyl-CoA thioesters as pentanoyl-CoA, hexenoyl-CoA and butenoyl-CoA. In Bos taurus (Bovine), this protein is Isovaleryl-CoA dehydrogenase, mitochondrial (IVD).